A 69-amino-acid polypeptide reads, in one-letter code: U2-agatoxin-Ao1w (69 aa).

The first 20 residues, 1–20, serve as a signal peptide directing secretion; the sequence is MRAIISLLLISAMVFSMIEA. Residues 21 to 34 constitute a propeptide that is removed on maturation; that stretch reads VPVEEGLQLFEGER. 3 disulfide bridges follow: Cys-37-Cys-53, Cys-44-Cys-58, and Cys-52-Cys-68.

The protein belongs to the neurotoxin 01 (U2-agtx) family. As to expression, expressed by the venom gland.

The protein resides in the secreted. Functionally, insect active toxin causing rapid but reversible paralysis in crickets. No activity shown in mammals. Does not show effect on mammalian voltage-gated calcium channels. The polypeptide is U2-agatoxin-Ao1w (Agelena orientalis (Funnel-web spider)).